Here is a 580-residue protein sequence, read N- to C-terminus: uncharacterized protein (580 aa).

The segment covering 1–44 (MSESSVNADTPKNTNDVLNGAYQSATTEPEGQYRSATDNPSLYQ) has biased composition (polar residues). A disordered region spans residues 1-45 (MSESSVNADTPKNTNDVLNGAYQSATTEPEGQYRSATDNPSLYQV). Phosphoserine is present on S99. Helical transmembrane passes span 143–163 (IYAY…PASA), 177–197 (LLNV…WAPM), 207–227 (LYIG…AQDI), 235–255 (FFGG…FADM), 265–285 (ITIF…VGGF), 295–315 (WTEY…YLFC), 370–390 (PIVF…YLLL), 405–425 (LGVS…GCGI), 450–470 (LPPM…LAWS), 476–496 (VHWI…LLIF), 511–533 (AASV…PLFA), and 546–566 (GSLL…FFFF).

It belongs to the major facilitator superfamily. CAR1 family.

The protein resides in the membrane. This is an uncharacterized protein from Schizosaccharomyces pombe (strain 972 / ATCC 24843) (Fission yeast).